Reading from the N-terminus, the 237-residue chain is Sensory rhodopsin-2 (237 aa).

Topologically, residues 1–2 are extracellular; the sequence is MA. The helical transmembrane segment at 3–23 threads the bilayer; it reads LTTWFWVGAVGMLAGTVLPIR. Over 24–31 the chain is Cytoplasmic; that stretch reads DCIRHPSH. A helical transmembrane segment spans residues 32–53; the sequence is RRYDLVLAGITGLAAIAYTTMG. The Extracellular portion of the chain corresponds to 54-67; it reads LGITATTVGDRTVY. The helical transmembrane segment at 68–89 threads the bilayer; it reads LARYIDWLVTTPLIVLYLAMLA. The Cytoplasmic portion of the chain corresponds to 90–92; sequence RPG. Residues 93 to 115 form a helical membrane-spanning segment; the sequence is HRTSAWLLAADVFVIAAGIAAAL. Residues 116–119 are Extracellular-facing; the sequence is TTGV. The chain crosses the membrane as a helical span at residues 120 to 147; sequence QRWLFFAVGAAGYAALLYGLLGTLPRAL. The Cytoplasmic portion of the chain corresponds to 148–150; it reads GDD. Residues 151-178 traverse the membrane as a helical segment; sequence PRVRSLFVTLRNITVVLWTLYPVVWLLS. The Extracellular segment spans residues 179–186; that stretch reads PAGIGILQ. The chain crosses the membrane as a helical span at residues 187 to 214; sequence TEMYTIVVVYLDFISKVAFVAFAVLGAD. N6-(retinylidene)lysine is present on lysine 202. Over 215-237 the chain is Cytoplasmic; it reads AVSRLVAADAAAPATAEPTPDGD.

This sequence belongs to the archaeal/bacterial/fungal opsin family. Interacts with HTR-II.

Its subcellular location is the cell membrane. Its function is as follows. Photophobic photoreceptor responsible for the negative phototaxis. Activates the sensory rhodopsin II transducer (HTR-II) in response to blue light. The protein is Sensory rhodopsin-2 (sop2) of Halobacterium salinarum (strain ATCC 700922 / JCM 11081 / NRC-1) (Halobacterium halobium).